Reading from the N-terminus, the 83-residue chain is Apolipoprotein C-I, basic form (83 aa).

A signal peptide spans 1–26; sequence MRLFLSLPVLVVVLSIVLEGPAPAQG.

This sequence belongs to the apolipoprotein C1 family.

The protein resides in the secreted. Inhibitor of lipoprotein binding to the low density lipoprotein (LDL) receptor, LDL receptor-related protein, and very low density lipoprotein (VLDL) receptor. Associates with high density lipoproteins (HDL) and the triacylglycerol-rich lipoproteins in the plasma and makes up about 10% of the protein of the VLDL and 2% of that of HDL. Appears to interfere directly with fatty acid uptake and is also the major plasma inhibitor of cholesteryl ester transfer protein (CETP). Binds free fatty acids and reduces their intracellular esterification. Modulates the interaction of APOE with beta-migrating VLDL and inhibits binding of beta-VLDL to the LDL receptor-related protein. The protein is Apolipoprotein C-I, basic form (APOC1B) of Pan troglodytes (Chimpanzee).